Reading from the N-terminus, the 284-residue chain is MEAIKNKMQAMKLEKDNAIDRAEIAEQKARDANLRAEKSEEEVRALQKKIQQIENELDQVQEQLSAANTKLEEKEKALQTAEGDVAALNRRIQLIEEDLERSEERLKIATAKLEEASQSADESERMRKMLEHRSITDEERMEGLENQLKEARMMAEDADRKYDEVARKLAMVEADLERAEERAETGESKIVELEEELRVVGNNLKSLEVSEEKAQQREEAHEQQIRIMTTKLKEAEARAEFAERSVQKLQKEVGRLEDELVHEKEKYKSISDELDQTFAELTGY.

Residues 1 to 284 adopt a coiled-coil conformation; that stretch reads MEAIKNKMQA…DQTFAELTGY (284 aa).

This sequence belongs to the tropomyosin family. As to quaternary structure, homodimer.

Its function is as follows. Tropomyosin, in association with the troponin complex, plays a central role in the calcium dependent regulation of muscle contraction. The sequence is that of Tropomyosin from Dermatophagoides pteronyssinus (European house dust mite).